A 62-amino-acid chain; its full sequence is Conotoxin Mi5.2 (62 aa).

An N-terminal signal peptide occupies residues 1 to 19 (MRCVPVFIILLLLIPSASS). A propeptide spanning residues 20-50 (VDVQPLTRDDVPLASFLDDARRTLRSPWMTR) is cleaved from the precursor.

Belongs to the conotoxin T superfamily. Contains 2 disulfide bonds that can be either 'C1-C3, C2-C4' or 'C1-C4, C2-C3', since these disulfide connectivities have been observed for conotoxins with cysteine framework V (for examples, see AC P0DQQ7 and AC P81755). Expressed by the venom duct.

Its subcellular location is the secreted. The sequence is that of Conotoxin Mi5.2 from Conus miles (Soldier cone).